The following is a 438-amino-acid chain: Na(+)/H(+) antiporter NhaA 2 (438 aa).

11 helical membrane passes run 21–41 (SGGIVLLGATVLALVLANSPW), 66–86 (LHHWINDGLMAVFFFLVGLEL), 102–122 (MLPIAAAFGGMLVPALIFHFI), 130–150 (KGWGIPMATDIAFALGVLALL), 160–180 (IFLTALAIVDDLGAVLVIALF), 183–203 (GELAVGKLLVALVLLLILIAG), 206–226 (LGVQSLNFYGLLGFCLWVVLL), 308–328 (WVIFGVIPIFALANAGLVLQL), 341–361 (LGVALGLLLGKPLGILFFSWI), 376–396 (WMDVFGVGILGGIGFTMSLFI), and 410–430 (AKLGIFIASMLAGAAGFTVLS).

The protein belongs to the NhaA Na(+)/H(+) (TC 2.A.33) antiporter family.

The protein localises to the cell inner membrane. It carries out the reaction Na(+)(in) + 2 H(+)(out) = Na(+)(out) + 2 H(+)(in). Na(+)/H(+) antiporter that extrudes sodium in exchange for external protons. The polypeptide is Na(+)/H(+) antiporter NhaA 2 (Syntrophotalea carbinolica (strain DSM 2380 / NBRC 103641 / GraBd1) (Pelobacter carbinolicus)).